Consider the following 120-residue polypeptide: Large ribosomal subunit protein P3y (120 aa).

A compositionally biased stretch (gly residues) spans 81–92; sequence GGAAAGGGGGGE. The tract at residues 81-120 is disordered; sequence GGAAAGGGGGGEAAAATKEEEKKKEESEEEEGDFGFDLFG. Residues 97–106 show a composition bias toward basic and acidic residues; the sequence is TKEEEKKKEE.

It belongs to the eukaryotic ribosomal protein P1/P2 family.

Plays an important role in the elongation step of protein synthesis. The chain is Large ribosomal subunit protein P3y (RPP3B) from Arabidopsis thaliana (Mouse-ear cress).